A 300-amino-acid chain; its full sequence is GTP cyclohydrolase FolE2 (300 aa).

This sequence belongs to the GTP cyclohydrolase IV family.

It carries out the reaction GTP + H2O = 7,8-dihydroneopterin 3'-triphosphate + formate + H(+). Its pathway is cofactor biosynthesis; 7,8-dihydroneopterin triphosphate biosynthesis; 7,8-dihydroneopterin triphosphate from GTP: step 1/1. Its function is as follows. Converts GTP to 7,8-dihydroneopterin triphosphate. This is GTP cyclohydrolase FolE2 from Bacillus licheniformis (strain ATCC 14580 / DSM 13 / JCM 2505 / CCUG 7422 / NBRC 12200 / NCIMB 9375 / NCTC 10341 / NRRL NRS-1264 / Gibson 46).